We begin with the raw amino-acid sequence, 116 residues long: Protein Rev (116 aa).

Position 5 is a phosphoserine; by host CK2 (serine 5). Residues 18-26 (LIKILYQSN) form a homomultimerization region. A disordered region spans residues 23-49 (YQSNPPPSPEGTRQARRNRRRRWRARQ). The Nuclear localization signal and RNA-binding (RRE) signature appears at 34–50 (TRQARRNRRRRWRARQR). Positions 36–49 (QARRNRRRRWRARQ) are enriched in basic residues. The Nuclear export signal and binding to XPO1 signature appears at 73–84 (LQLPPLERLNLN). Positions 86–116 (SEDCGTSGTQGVGSPQISVESPTVLESGTEE) are disordered. Residues serine 92 and serine 99 each carry the phosphoserine; by host modification.

It belongs to the HIV-1 REV protein family. As to quaternary structure, homomultimer; when bound to the RRE. Multimeric assembly is essential for activity and may involve XPO1. Binds to human KPNB1, XPO1, TNPO1, RANBP5 and IPO7. Interacts with the viral Integrase. Interacts with human KHDRBS1. Interacts with human NAP1; this interaction decreases Rev multimerization and stimulates its activity. Interacts with human DEAD-box helicases DDX3 and DDX24; these interactions may serve for viral RNA export to the cytoplasm and packaging, respectively. Interacts with human PSIP1; this interaction may inhibit HIV-1 DNA integration by promoting dissociation of the Integrase-LEDGF/p75 complex. Post-translationally, asymmetrically arginine dimethylated at one site by host PRMT6. Methylation impairs the RNA-binding activity and export of viral RNA from the nucleus to the cytoplasm. Phosphorylated by protein kinase CK2. Presence of, and maybe binding to the N-terminus of the regulatory beta subunit of CK2 is necessary for CK2-mediated Rev's phosphorylation.

Its subcellular location is the host nucleus. It is found in the host nucleolus. The protein localises to the host cytoplasm. Its function is as follows. Escorts unspliced or incompletely spliced viral pre-mRNAs (late transcripts) out of the nucleus of infected cells. These pre-mRNAs carry a recognition sequence called Rev responsive element (RRE) located in the env gene, that is not present in fully spliced viral mRNAs (early transcripts). This function is essential since most viral proteins are translated from unspliced or partially spliced pre-mRNAs which cannot exit the nucleus by the pathway used by fully processed cellular mRNAs. Rev itself is translated from a fully spliced mRNA that readily exits the nucleus. Rev's nuclear localization signal (NLS) binds directly to KPNB1/Importin beta-1 without previous binding to KPNA1/Importin alpha-1. KPNB1 binds to the GDP bound form of RAN (Ran-GDP) and targets Rev to the nucleus. In the nucleus, the conversion from Ran-GDP to Ran-GTP dissociates Rev from KPNB1 and allows Rev's binding to the RRE in viral pre-mRNAs. Rev multimerization on the RRE via cooperative assembly exposes its nuclear export signal (NES) to the surface. Rev can then form a complex with XPO1/CRM1 and Ran-GTP, leading to nuclear export of the complex. Conversion from Ran-GTP to Ran-GDP mediates dissociation of the Rev/RRE/XPO1/RAN complex, so that Rev can return to the nucleus for a subsequent round of export. Beside KPNB1, also seems to interact with TNPO1/Transportin-1, RANBP5/IPO5 and IPO7/RANBP7 for nuclear import. The nucleoporin-like HRB/RIP is an essential cofactor that probably indirectly interacts with Rev to release HIV RNAs from the perinuclear region to the cytoplasm. The sequence is that of Protein Rev from Homo sapiens (Human).